Consider the following 401-residue polypeptide: Patatin-like protein 4 (401 aa).

Positions 17-218 (LSLDGGGVRG…TANDPTLVGM (202 aa)) constitute a PNPLA domain. The GXGXXG signature appears at 21–26 (GGGVRG). The GXSXG signature appears at 60 to 64 (GTSTG). Ser-62 serves as the catalytic Nucleophile. Asp-205 acts as the Proton acceptor in catalysis. A DGA/G motif is present at residues 205–207 (DGG).

This sequence belongs to the patatin family.

In terms of biological role, possesses non-specific lipolytic acyl hydrolase (LAH) activity. Hydrolyzes phospholipids as well as galactolipids. May play a role in disease resistance. This chain is Patatin-like protein 4 (PLP4), found in Arabidopsis thaliana (Mouse-ear cress).